The chain runs to 152 residues: Complexin (152 aa).

The tract at residues Met-1–Lys-119 is disordered. The span at Asp-23 to Ala-39 shows a compositional bias: acidic residues. Composition is skewed to basic and acidic residues over residues Glu-41–Glu-82 and Asp-90–Leu-104. Residues Glu-59–Leu-75 form an interaction with the SNARE complex region. At Cys-149 the chain carries Cysteine methyl ester. Cys-149 carries S-farnesyl cysteine lipidation. The propeptide at Ser-150–Gln-152 is removed in mature form.

The protein belongs to the complexin/synaphin family. Binds to the SNARE core complex containing SNAP25, synaptobrevin and syntaxin-1.

Its subcellular location is the membrane. It localises to the cytoplasm. The protein resides in the cytosol. Its function is as follows. Positively regulates a late step in synaptic vesicle exocytosis. This is Complexin (cpx) from Doryteuthis pealeii (Longfin inshore squid).